A 58-amino-acid chain; its full sequence is Small ribosomal subunit protein bS21 (58 aa).

The disordered stretch occupies residues 24 to 58 (TKAGTLQEARKREHYEKPSVKRKRKSEAARKRKKI). Positions 31–42 (EARKREHYEKPS) are enriched in basic and acidic residues. The span at 43–58 (VKRKRKSEAARKRKKI) shows a compositional bias: basic residues.

Belongs to the bacterial ribosomal protein bS21 family.

The protein is Small ribosomal subunit protein bS21 of Streptococcus thermophilus (strain CNRZ 1066).